A 208-amino-acid chain; its full sequence is Small ribosomal subunit protein uS4 (208 aa).

The segment at 31–50 is disordered; the sequence is SALDKRAYGPGQHGQRRTKT. In terms of domain architecture, S4 RNA-binding spans 98–161; sequence RRLDNVVYRM…KSNPQVVRAM (64 aa).

It belongs to the universal ribosomal protein uS4 family. As to quaternary structure, part of the 30S ribosomal subunit. Contacts protein S5. The interaction surface between S4 and S5 is involved in control of translational fidelity.

Functionally, one of the primary rRNA binding proteins, it binds directly to 16S rRNA where it nucleates assembly of the body of the 30S subunit. With S5 and S12 plays an important role in translational accuracy. The chain is Small ribosomal subunit protein uS4 from Helicobacter pylori (strain J99 / ATCC 700824) (Campylobacter pylori J99).